The following is a 517-amino-acid chain: MYLNGRITRIFRLKKNSFRQQNFLYPLLLQEYIYSLAHYNSFNSLISYEPVEIIGYDNKSSLVLVKRLITRMYQQKSLISSLNDSNQNEFWGHKNSFSSHFSSQMVSEGFGVILEIPFLSRLVSSLEEKRIPKYQNLRSIHSIFPFLEDKLSHLNYVSDLLIPHPIHLEILVQILQCWIKDVPSLHLLRLFFHEYHNLNSLITSKKAIDVFSKRKKRFFWFLHNSYVYECEYLFLFLRKQSSYLRSISSGVFLERTQFYGKIEYLIIRCCNSFQKILWVLKDTFIHYVRYQGKAILASERTLILMNGWKFHLVNFWQSYFHFWVQPYRIHINQLPNYSFSFLGYFSSVRKNPLVVRNQMLENSFLINTLNNKLDTIVPAISLIGSLSKAQFCTVLGHLISKPIWTDLSDSAIRDRFCRICRNLCRYHTGSSKKQVLDRIKYILRLSCARTLARKHKSTVRTFMRRLGSGFLKEFFLEEEQSPSLIFLQKISFILHGLHRERIWYLDIIRINDLVDHS.

The protein belongs to the intron maturase 2 family. MatK subfamily.

Its subcellular location is the plastid. The protein localises to the chloroplast. In terms of biological role, usually encoded in the trnK tRNA gene intron. Probably assists in splicing its own and other chloroplast group II introns. The protein is Maturase K of Dracula chimaera.